The primary structure comprises 266 residues: Interleukin-33 (266 aa).

The tract at residues 1–67 is homeodomain-like HTH domain; that stretch reads MRPRMKYSNS…ETSYFRKEPT (67 aa). Residues 1–101 constitute a propeptide that is removed on maturation; the sequence is MRPRMKYSNS…RSLLGSIQAF (101 aa). The interaction with RELA stretch occupies residues 66 to 108; the sequence is PTKRYSLKSGTKHEENFSAYPRDSRKRSLLGSIQAFAASVDTL.

The protein belongs to the IL-1 family. Highly divergent. As to quaternary structure, (Microbial infection) Interacts (in reduced form) with H.polygyrus ARI; the interaction abolishes the interaction with its primary receptor IL1RL1. Forms a 1:1:1 heterotrimeric complex with its primary high-affinity receptor IL1RL1 and the coreceptor IL1RAP. Interacts with cargo receptor TMED10; the interaction mediates the translocation from the cytoplasm into the ERGIC (endoplasmic reticulum-Golgi intermediate compartment) and thereby secretion. The full-length protein can be released from cells and is able to signal via the IL1RL1/ST2 receptor. However, proteolytic processing by CELA1, CSTG/cathepsin G and ELANE/neutrophil elastase produces C-terminal peptides that are more active than the unprocessed full-length protein. May also be proteolytically processed by calpains. Proteolytic cleavage mediated by apoptotic caspases including CASP3 and CASP7 results in IL33 inactivation. In vitro proteolytic cleavage by CASP1 was reported but could not be confirmed in vivo suggesting that IL33 is probably not a direct substrate for that caspase.

It is found in the nucleus. The protein localises to the chromosome. It localises to the cytoplasm. The protein resides in the cytoplasmic vesicle. Its subcellular location is the secretory vesicle. It is found in the secreted. Its function is as follows. Cytokine that binds to and signals through the IL1RL1/ST2 receptor which in turn activates NF-kappa-B and MAPK signaling pathways in target cells. Involved in the maturation of Th2 cells inducing the secretion of T-helper type 2-associated cytokines. Also involved in activation of mast cells, basophils, eosinophils and natural killer cells. Acts as an enhancer of polarization of alternatively activated macrophages. Acts as a chemoattractant for Th2 cells, and may function as an 'alarmin', that amplifies immune responses during tissue injury. Induces rapid UCP2-dependent mitochondrial rewiring that attenuates the generation of reactive oxygen species and preserves the integrity of Krebs cycle required for persistent production of itaconate and subsequent GATA3-dependent differentiation of inflammation-resolving alternatively activated macrophages. Functionally, in quiescent endothelia the uncleaved form is constitutively and abundantly expressed, and acts as a chromatin-associated nuclear factor with transcriptional repressor properties, it may sequester nuclear NF-kappaB/RELA, lowering expression of its targets. This form is rapidely lost upon angiogenic or pro-inflammatory activation. The chain is Interleukin-33 from Mus musculus (Mouse).